Consider the following 470-residue polypeptide: ATP synthase subunit beta (470 aa).

An ATP-binding site is contributed by 155–162 (GGAGVGKT).

This sequence belongs to the ATPase alpha/beta chains family. As to quaternary structure, F-type ATPases have 2 components, CF(1) - the catalytic core - and CF(0) - the membrane proton channel. CF(1) has five subunits: alpha(3), beta(3), gamma(1), delta(1), epsilon(1). CF(0) has three main subunits: a(1), b(2) and c(9-12). The alpha and beta chains form an alternating ring which encloses part of the gamma chain. CF(1) is attached to CF(0) by a central stalk formed by the gamma and epsilon chains, while a peripheral stalk is formed by the delta and b chains.

It localises to the cell membrane. It carries out the reaction ATP + H2O + 4 H(+)(in) = ADP + phosphate + 5 H(+)(out). Produces ATP from ADP in the presence of a proton gradient across the membrane. The catalytic sites are hosted primarily by the beta subunits. The protein is ATP synthase subunit beta of Staphylococcus epidermidis (strain ATCC 35984 / DSM 28319 / BCRC 17069 / CCUG 31568 / BM 3577 / RP62A).